Here is a 191-residue protein sequence, read N- to C-terminus: ECF RNA polymerase sigma-E factor (191 aa).

Positions 1-153 (MSEQLTDQVL…MAITLRELDG (153 aa)) are binds RNAP core. A sigma-70 factor domain-2 region spans residues 25-92 (LVVRYQHKVA…KNYLVAQGRR (68 aa)). A Polymerase core binding motif is present at residues 48 to 61 (DVVQESFIKAYRAL). Residues 129–180 (QIVFRTIESLPEDLRMAITLRELDGLSYEEIAAIMDCPVGTVRSRIFRAREA) are sigma-70 factor domain-4. The H-T-H motif DNA-binding region spans 156-175 (YEEIAAIMDCPVGTVRSRIF).

This sequence belongs to the sigma-70 factor family. ECF subfamily. Interacts transiently with the RNAP catalytic core formed by RpoA, RpoB, RpoC and RpoZ (2 alpha, 1 beta, 1 beta' and 1 omega subunit) to form the RNAP holoenzyme that can initiate transcription. Interacts 1:1 with anti-sigma-E factor RseA which prevents binding to RNAP catalytic core.

It localises to the cytoplasm. Its activity is regulated as follows. ECF sigma-E is held in an inactive form by its cognate anti-sigma factor (RseA) until released by regulated intramembrane proteolysis (RIP). RIP occurs when an extracytoplasmic signal (periplasmic, acid or heat stress) triggers a concerted proteolytic cascade to transmit information and elicit cellular responses. In S.typhimurium there are 2 cascades, the heat shock response which depends on DegS and RseP, and acid response which depends only on RseP. The anti-sigma factor RseA is an inner membrane protein, binding sigma-E in the cytoplasm and RseB in the periplasm. RseA is first cut extracytoplasmically (site-1 protease, S1P, by DegS), then within the membrane itself (site-2 protease, S2P, by RseP), while cytoplasmic proteases (predominantly ClpX-ClpP) finish degrading the regulatory protein, liberating sigma-E. Degradation of RseA requires 2 signals to activate DegS; an outer membrane protein (OMP) signal activates DegS, while an LPS signal causes release of RseB from RseA, freeing RseA to be cleaved. OMP stress can be abrogated by overexpression of the sRNA rybB. Sigma factors are initiation factors that promote the attachment of RNA polymerase (RNAP) to specific initiation sites and are then released. Extracytoplasmic function (ECF) sigma-E controls the envelope stress response, responding to periplasmic protein stress, increased levels of periplasmic lipopolysaccharide (LPS) as well as acid stress, heat shock and oxidative stress; it controls protein processing in the extracytoplasmic compartment. The sequence is that of ECF RNA polymerase sigma-E factor (rpoE) from Salmonella typhimurium (strain 14028s / SGSC 2262).